The primary structure comprises 150 residues: Large ribosomal subunit protein uL13 (150 aa).

The disordered stretch occupies residues 129–150 (TEHPHAAQKPQPLQLNPSASAQ). The span at 139-150 (QPLQLNPSASAQ) shows a compositional bias: polar residues.

This sequence belongs to the universal ribosomal protein uL13 family. Part of the 50S ribosomal subunit.

This protein is one of the early assembly proteins of the 50S ribosomal subunit, although it is not seen to bind rRNA by itself. It is important during the early stages of 50S assembly. This is Large ribosomal subunit protein uL13 from Synechococcus sp. (strain CC9605).